A 478-amino-acid chain; its full sequence is Putative multidrug resistance outer membrane protein MdtQ (478 aa).

An N-terminal signal peptide occupies residues 1 to 21 (MNRDSFYPAIACFPLLLMLAG). The N-palmitoyl cysteine moiety is linked to residue cysteine 22. Cysteine 22 is lipidated: S-diacylglycerol cysteine.

The protein belongs to the outer membrane factor (OMF) (TC 1.B.17) family.

It is found in the cell outer membrane. Functionally, could be involved in resistance to puromycin, acriflavine and tetraphenylarsonium chloride. This chain is Putative multidrug resistance outer membrane protein MdtQ (mdtQ), found in Escherichia coli (strain K12).